A 236-amino-acid polypeptide reads, in one-letter code: 2-C-methyl-D-erythritol 4-phosphate cytidylyltransferase (236 aa).

The protein belongs to the IspD/TarI cytidylyltransferase family. IspD subfamily. As to quaternary structure, homodimer.

The catalysed reaction is 2-C-methyl-D-erythritol 4-phosphate + CTP + H(+) = 4-CDP-2-C-methyl-D-erythritol + diphosphate. It functions in the pathway isoprenoid biosynthesis; isopentenyl diphosphate biosynthesis via DXP pathway; isopentenyl diphosphate from 1-deoxy-D-xylulose 5-phosphate: step 2/6. Functionally, catalyzes the formation of 4-diphosphocytidyl-2-C-methyl-D-erythritol from CTP and 2-C-methyl-D-erythritol 4-phosphate (MEP). This Salmonella paratyphi A (strain ATCC 9150 / SARB42) protein is 2-C-methyl-D-erythritol 4-phosphate cytidylyltransferase.